The chain runs to 219 residues: Proteasome subunit beta type-9 (219 aa).

A propeptide spans 1–20 (MLRAGAPTAGSFRTEEVHTG) (removed in mature form). Residue T21 is the Nucleophile of the active site. 2 positions are modified to N6-acetyllysine: K53 and K109.

The protein belongs to the peptidase T1B family. As to quaternary structure, the 26S proteasome consists of a 20S proteasome core and two 19S regulatory subunits. The 20S proteasome core is composed of 28 subunits that are arranged in four stacked rings, resulting in a barrel-shaped structure. The two end rings are each formed by seven alpha subunits, and the two central rings are each formed by seven beta subunits. The catalytic chamber with the active sites is on the inside of the barrel. Component of the immunoproteasome, where it displaces the equivalent housekeeping subunit PSMB6. Component of the spermatoproteasome, a form of the proteasome specifically found in testis. Autocleaved. The resulting N-terminal Thr residue of the mature subunit is responsible for the nucleophile proteolytic activity.

Its subcellular location is the cytoplasm. The protein localises to the nucleus. The catalysed reaction is Cleavage of peptide bonds with very broad specificity.. Its function is as follows. The proteasome is a multicatalytic proteinase complex which is characterized by its ability to cleave peptides with Arg, Phe, Tyr, Leu, and Glu adjacent to the leaving group at neutral or slightly basic pH. The proteasome has an ATP-dependent proteolytic activity. This subunit is involved in antigen processing to generate class I binding peptides. The protein is Proteasome subunit beta type-9 (Psmb9) of Mus musculus bactrianus (Southwestern Asian house mouse).